Here is a 199-residue protein sequence, read N- to C-terminus: Elongation factor Ts (199 aa).

Residues 80 to 83 (TDFV) are involved in Mg(2+) ion dislocation from EF-Tu.

It belongs to the EF-Ts family.

The protein resides in the cytoplasm. Associates with the EF-Tu.GDP complex and induces the exchange of GDP to GTP. It remains bound to the aminoacyl-tRNA.EF-Tu.GTP complex up to the GTP hydrolysis stage on the ribosome. In Thermodesulfovibrio yellowstonii (strain ATCC 51303 / DSM 11347 / YP87), this protein is Elongation factor Ts.